Consider the following 280-residue polypeptide: H-2 class II histocompatibility antigen gamma chain (280 aa).

The Cytoplasmic segment spans residues 1–30 (MDDQRDLISNHEQLPILGQRARAPESNCNR). Ser-9 is subject to Phosphoserine. Residues 31 to 56 (GVLYTSVSVLVALLLAGQATTAYFLY) traverse the membrane as a helical; Signal-anchor for type II membrane protein segment. At 57-280 (QQQGRLDKLT…TKQDMGQMFL (224 aa)) the chain is on the extracellular side. N-linked (GlcNAc...) asparagine glycosylation is found at Asn-114 and Asn-120. The Thyroglobulin type-1 domain maps to 194 to 255 (LTKCQEEVSH…HTKSRGRHNC (62 aa)). Intrachain disulfides connect Cys-197–Cys-216, Cys-227–Cys-234, and Cys-236–Cys-255. Residues 246–268 (HTKSRGRHNCSEPLDMEDPSSGL) are disordered. Ser-266 carries O-linked (Xyl...) (chondroitin sulfate) serine glycosylation.

In terms of assembly, nonamer composed of three alpha/beta/gamma heterotrimers. Interacts with CD44; this complex is essential for the MIF-induced signaling cascade that results in B cell survival. As to quaternary structure, interacts with the mature form of CTSL; the complex survive in neutral pH environment.

It is found in the late endosome. Its subcellular location is the lysosome. The protein localises to the cell membrane. It localises to the endoplasmic reticulum membrane. The protein resides in the golgi apparatus. It is found in the trans-Golgi network. Its subcellular location is the endosome. The protein localises to the secreted. Functionally, plays a critical role in MHC class II antigen processing by stabilizing peptide-free class II alpha/beta heterodimers in a complex soon after their synthesis and directing transport of the complex from the endoplasmic reticulum to compartments where peptide loading of class II takes place. Enhance also the stimulation of T-cell responses through interaction with CD44. Its function is as follows. Binds to the peptide-binding site of MHC class II alpha/beta heterodimers forming an alpha-beta-CLIP complex, thereby preventing the loading of antigenic peptides to the MHC class II complex until its release by HLA-DM in the endosome. In terms of biological role, stabilizes the conformation of mature CTSL by binding to its active site and serving as a chaperone to help maintain a pool of mature enzyme in endocytic compartments and extracellular space of antigen-presenting cells (APCs). The sequence is that of H-2 class II histocompatibility antigen gamma chain from Rattus norvegicus (Rat).